The chain runs to 228 residues: DNA mismatch repair protein MutH (228 aa).

It belongs to the MutH family.

The protein localises to the cytoplasm. Its function is as follows. Sequence-specific endonuclease that cleaves unmethylated GATC sequences. It is involved in DNA mismatch repair. This Serratia proteamaculans (strain 568) protein is DNA mismatch repair protein MutH.